Consider the following 210-residue polypeptide: MSDIGTLSAKGRDRAGKGAARATRREGQVPAVIYGGRQDPVLLSLAPRLIHTEMRKAGFSSRLFDLTVEGGETHRVMVQDVQFHPVTDMPIHVDFLRIGKDTEVTVAIPVHFINETASPGLKRGGVLNVVRHEIEVHGRPDALPDFFEVDLTGAEVGDSIHVGVVKIPEGVRPVIAERDFTICTIAAPSGLKSEEAAAGEAAAAAATPAA.

The segment at M1–T23 is disordered.

The protein belongs to the bacterial ribosomal protein bL25 family. CTC subfamily. Part of the 50S ribosomal subunit; part of the 5S rRNA/L5/L18/L25 subcomplex. Contacts the 5S rRNA. Binds to the 5S rRNA independently of L5 and L18.

Functionally, this is one of the proteins that binds to the 5S RNA in the ribosome where it forms part of the central protuberance. The chain is Large ribosomal subunit protein bL25 from Rhodospirillum rubrum (strain ATCC 11170 / ATH 1.1.1 / DSM 467 / LMG 4362 / NCIMB 8255 / S1).